Reading from the N-terminus, the 1166-residue chain is Reverse gyrase (1166 aa).

The RG N-terminal-type zinc-finger motif lies at 1-40 (MINVMYKNSCPNCGGDISADRLLNGLPCETCLPYINGIDG). Positions 10, 13, 28, and 31 each coordinate Zn(2+). ATP is bound by residues Q92 and 109–116 (APTGLGKT). The Helicase ATP-binding domain maps to 96–285 (LRRLVSNQSF…ALRLLTGFEP (190 aa)). The DEAD box motif lies at 190–193 (DDAD). Positions 576–1166 (FNISTGLLIV…VNPLKSEQNV (591 aa)) are topoisomerase I. Residues 580-743 (TGLLIVESPT…NIYRITYHEI (164 aa)) enclose the Toprim domain. E586 contributes to the Mg(2+) binding site. The RG C-terminal-type zinc-finger motif lies at 662-689 (IKKCLDCNKTFSIASDKCPYCGSTNVQT). 4 residues coordinate Zn(2+): C665, C668, C679, and C682. D712 is a binding site for Mg(2+). Residues 759–1157 (NTNLVMSQIV…EIFSEISTLV (399 aa)) form the Topo IA-type catalytic domain. The active-site O-(5'-phospho-DNA)-tyrosine intermediate is Y903.

In the N-terminal section; belongs to the DEAD box helicase family. DDVD subfamily. This sequence in the C-terminal section; belongs to the type IA topoisomerase family. As to quaternary structure, monomer. Requires Zn(2+) as cofactor. The cofactor is Mg(2+).

The protein localises to the cytoplasm. It catalyses the reaction ATP + H2O = ADP + phosphate + H(+). Inhibited by UV light-induced lesions; substrate is completely cleaved but a nicked form accumulates, suggesting the reaction is blocked between the cleavage and ligation steps. Inhibited by actinomycin D; substrate DNA remains negatively supercoiled in this case. Activity is stimulated by SSB from S.solfataricus strain P2. Positive supercoiling is inhibited by Sul7d (also called Sso7d) from S.solfataricus strain MT4; SSB from S.solfataricus strain P2 relieves this inhibition. In terms of biological role, modifies the topological state of DNA by introducing positive supercoils in an ATP-dependent process. Increases the linking number in steps of +1. In vitro requires high concentrations to supercoil negatively supercoiled DNA, relaxes plasmid DNA first; DNA single-strand binding protein (SSB) from S.solfataricus strain P2 stimulates positive supercoiling. SSB stimulates DNA-binding by reverse gyrase, and thus all subsequent steps. Binds to single-stranded DNA, transiently cleaves and then rejoins the ends, introducing a positive supercoil in the process. The scissile phosphodiester is attacked by the catalytic tyrosine of the enzyme, resulting in the formation of a DNA-(5'-phosphotyrosyl)-enzyme intermediate. May be involved in DNA damage response. Probably involved in rewinding DNA strands in regions of the chromosome that have opened up to allow replication, transcription, DNA repair and/or for DNA protection. The chain is Reverse gyrase from Saccharolobus shibatae (strain ATCC 51178 / DSM 5389 / JCM 8931 / NBRC 15437 / B12) (Sulfolobus shibatae).